The following is a 31-amino-acid chain: Cyclotide mden-M (31 aa).

The segment at residues 1–31 (GTIPCGESCVYIPCITSALGCSCKKKVCYKN) is a cross-link (cyclopeptide (Gly-Asn)). 3 disulfide bridges follow: cysteine 5/cysteine 21, cysteine 9/cysteine 23, and cysteine 14/cysteine 28.

The protein belongs to the cyclotide family. Bracelet subfamily. Post-translationally, this is a cyclic peptide.

Functionally, probably participates in a plant defense mechanism. This chain is Cyclotide mden-M, found in Melicytus dentatus (Tree violet).